Here is a 522-residue protein sequence, read N- to C-terminus: Cytochrome P450 26C1 (522 aa).

A helical transmembrane segment spans residues 9–29; the sequence is LSVLGAAGTALLCAGLLLSLA. C459 serves as a coordination point for heme.

This sequence belongs to the cytochrome P450 family. It depends on heme as a cofactor. Detected in most tissues at very low level.

Its subcellular location is the membrane. It carries out the reaction an organic molecule + reduced [NADPH--hemoprotein reductase] + O2 = an alcohol + oxidized [NADPH--hemoprotein reductase] + H2O + H(+). The enzyme catalyses all-trans-retinoate + reduced [NADPH--hemoprotein reductase] + O2 = all-trans-4-hydroxyretinoate + oxidized [NADPH--hemoprotein reductase] + H2O + H(+). The catalysed reaction is all-trans-4-hydroxyretinoate + reduced [NADPH--hemoprotein reductase] + O2 = all-trans-4-oxoretinoate + oxidized [NADPH--hemoprotein reductase] + 2 H2O + H(+). It catalyses the reaction 9-cis-retinoate + reduced [NADPH--hemoprotein reductase] + O2 = 9-cis-4-hydroxyretinoate + oxidized [NADPH--hemoprotein reductase] + H2O + H(+). It carries out the reaction 9-cis-4-hydroxyretinoate + reduced [NADPH--hemoprotein reductase] + O2 = 9-cis-4-oxoretinoate + oxidized [NADPH--hemoprotein reductase] + 2 H2O + H(+). The enzyme catalyses all-trans-4-hydroxy-13,14-dihydroretinoate + reduced [NADPH--hemoprotein reductase] + O2 = all-trans-4-oxo-13,14-dihydroretinoate + oxidized [NADPH--hemoprotein reductase] + 2 H2O + H(+). The catalysed reaction is all-trans-13,14-dihydroretinoate + reduced [NADPH--hemoprotein reductase] + O2 = all-trans-4-hydroxy-13,14-dihydroretinoate + oxidized [NADPH--hemoprotein reductase] + H2O + H(+). A cytochrome P450 monooxygenase involved in the metabolism of retinoates (RAs), the active metabolites of vitamin A, and critical signaling molecules in animals. RAs exist as at least four different isomers: all-trans-RA (atRA), 9-cis-RA, 13-cis-RA, and 9,13-dicis-RA, where atRA is considered to be the biologically active isomer, although 9-cis-RA and 13-cis-RA also have activity. Catalyzes the oxidation of atRA primarily at C-4. Oxidation of atRA limits its biological activity and initiates a degradative process leading to its eventual elimination, thereby contributes to the regulation of atRA homeostasis and signaling. Able to metabolize other RAs such as 9-cis with high efficiency. Can oxidize all-trans-13,14-dihydroretinoate (DRA) to metabolites which could include all-trans-4-oxo-DRA, all-trans-4-hydroxy-DRA, all-trans-5,8-epoxy-DRA, and all-trans-18-hydroxy-DRA. Shares sequence similarity with other CYP26 family members, but has higher affinity to 9-cis-RA and is much less sensitive to the inhibitory effects of ketoconazole. In cooperation with Cyp26a1, contributes to the CNS patterning and the development of regions of higher visual acuity. This Homo sapiens (Human) protein is Cytochrome P450 26C1 (CYP26C1).